Reading from the N-terminus, the 209-residue chain is Ras-like protein (209 aa).

A GTP-binding site is contributed by 15–22 (GGGGEGKS). The Effector region motif lies at 37–45 (YDPTIEESY). GTP-binding positions include 62–66 (DTAGQ) and 121–124 (NKCD). S-palmitoyl cysteine attachment occurs at residues cysteine 202 and cysteine 203. Cysteine 206 is modified (cysteine methyl ester). Cysteine 206 is lipidated: S-geranylgeranyl cysteine. The propeptide at 207 to 209 (IVM) is removed in mature form.

This sequence belongs to the small GTPase superfamily. Ras family.

It localises to the cell membrane. It catalyses the reaction GTP + H2O = GDP + phosphate + H(+). Its activity is regulated as follows. Alternates between an inactive form bound to GDP and an active form bound to GTP. Activated by a guanine nucleotide-exchange factor (GEF) and inactivated by a GTPase-activating protein (GAP). This chain is Ras-like protein, found in Laccaria bicolor (Bicoloured deceiver).